A 497-amino-acid chain; its full sequence is SPI-2 type 3 secretion system secretin (497 aa).

Positions 1-20 (MVVNKRLILILLFILNTAKS) are cleaved as a signal peptide.

It belongs to the bacterial secretin family. T3SS SctC subfamily. The core secretion machinery of the T3SS is composed of approximately 20 different proteins, including cytoplasmic components, a base, an export apparatus and a needle. This subunit is part of the base, which anchors the injectisome in the bacterial cell envelope. Forms a stable homooligomeric complex.

The protein localises to the cell outer membrane. Component of the type III secretion system (T3SS), also called injectisome, which is used to inject bacterial effector proteins into eukaryotic host cells. Forms a ring-shaped multimeric structure with an apparent central pore in the outer membrane. Required for secretion of some type III-secreted effectors including the SpvB exotoxin. This is SPI-2 type 3 secretion system secretin from Salmonella typhimurium (strain 14028s / SGSC 2262).